Reading from the N-terminus, the 311-residue chain is MVNPLYQKHIISINDLSREDLELALNVAASLKAKPQPELLKHKVIASCFFEASTRTRLSFETAMHRLGASVVGFADSNNTSLGKKGETLADTISVISQYVDAIVMRHPQEGASRLATEFSGGIPVLNAGDGANQHPTQTLLDLFTIQETQGRLNNINIAMVGDLKYGRTVHSLTQALAKFEGNRFYFIAPDALAMPDYILSMLKEKNIAYSLHNSIDEVVGELDILYMTRVQKERLDPSEYINIKSQFVLRAADLDNARPNLKVLHPLPRVDEITIDVDTTPYAYYFQQAGNGIYARQALLALVLNRELVL.

Residues arginine 55 and threonine 56 each contribute to the carbamoyl phosphate site. Lysine 85 contributes to the L-aspartate binding site. Residues arginine 106, histidine 135, and glutamine 138 each contribute to the carbamoyl phosphate site. The L-aspartate site is built by arginine 168 and arginine 230. The carbamoyl phosphate site is built by leucine 268 and proline 269.

It belongs to the aspartate/ornithine carbamoyltransferase superfamily. ATCase family. As to quaternary structure, heterododecamer (2C3:3R2) of six catalytic PyrB chains organized as two trimers (C3), and six regulatory PyrI chains organized as three dimers (R2).

The enzyme catalyses carbamoyl phosphate + L-aspartate = N-carbamoyl-L-aspartate + phosphate + H(+). It functions in the pathway pyrimidine metabolism; UMP biosynthesis via de novo pathway; (S)-dihydroorotate from bicarbonate: step 2/3. In terms of biological role, catalyzes the condensation of carbamoyl phosphate and aspartate to form carbamoyl aspartate and inorganic phosphate, the committed step in the de novo pyrimidine nucleotide biosynthesis pathway. This is Aspartate carbamoyltransferase catalytic subunit from Pectobacterium atrosepticum (strain SCRI 1043 / ATCC BAA-672) (Erwinia carotovora subsp. atroseptica).